The following is a 293-amino-acid chain: MPIELAMSLYLSSDEFLNPRASKYSRPLQPCLNQCKSSKLSFSSLKEQSEFNGVSRALMIPGRAKKHVSFADHKGLALTVVKIFSEFDDPIDIPDNIDNFFTSSLTVSEGKDKLTLDFDQPSADYLKFRQRIENDHVCLEHCMLKEKSIMGTVKVKNISFEKSVKLRITFNTWKNHTDVECQYVKDTYTGSNRDTFSFEASLPEQVPSHERIEFAICYEVNGDTLWDNNQGKNYRIIQSALRKSSNESNGGHQQYSQSDWDIHFDRYGSPRCSRGIFPHWPSYVGYEDIGPYY.

A CBM21 domain is found at 129 to 237; sequence RQRIENDHVC…NNQGKNYRII (109 aa).

As to quaternary structure, interacts with glycogen, PPP1CC catalytic subunit of PP1 and PYGL. Associates with glycogen particles. Forms complexes with debranching enzyme, glycogen phosphorylase, glycogen synthase and phosphorylase kinase which is necessary for its regulation of PP1 activity.

Its function is as follows. Acts as a glycogen-targeting subunit for phosphatase PP1. Facilitates interaction of the PP1 with enzymes of the glycogen metabolism and regulates its activity. Suppresses the rate at which PP1 dephosphorylates (inactivates) glycogen phosphorylase and enhances the rate at which it activates glycogen synthase and therefore limits glycogen breakdown. This Danio rerio (Zebrafish) protein is Protein phosphatase 1 regulatory subunit 3B (ppp1r3b).